The chain runs to 118 residues: uncharacterized protein (118 aa).

Residues 41–61 (IFLLIIITIIFALTMYTSVQV) traverse the membrane as a helical segment.

It localises to the host membrane. This is an uncharacterized protein from Ostreid herpesvirus 1 (isolate France) (OsHV-1).